The following is a 674-amino-acid chain: Electrogenic aspartate/glutamate antiporter SLC25A13, mitochondrial (674 aa).

Alanine 2 bears the N-acetylalanine mark. The interval 2–295 (AAAKVALTKR…TLADIERIAP (294 aa)) is regulatory N-terminal domain. Topologically, residues 2 to 331 (AAAKVALTKR…LLQVAESAYR (330 aa)) are mitochondrial intermembrane. 4 EF-hand domains span residues 51-86 (SQPNPKTVELLSGVADQTKDGLISFQEFVAFESVLC), 87-122 (APDALFMVAFQLFDKAGKGEVTFEDVKQVFGQTTIH), 123-157 (QHIPFNWDSEFVQLHFGKERKRHLTYAEFTQFLLE), and 158-193 (IQLEHAKQAFVQRDNASTGRVTAIDFRDIMVTIRPH). 5 residues coordinate Ca(2+): aspartate 66, threonine 68, aspartate 70, leucine 72, and glutamate 77. The interval 296–311 (LEEGTLPFNLAEAQRQ) is linker loop domain. Residues 321–611 (VLLQVAESAY…LQRWFYIDFG (291 aa)) form a carrier domain region. Solcar repeat units lie at residues 326 to 418 (AESA…VRDK), 426 to 510 (VPLA…ARAS), and 518 to 605 (VSPG…LQRW). Residues 332 to 349 (FGLGSVAGAVGATAVYPI) form a helical membrane-spanning segment. Residues 350-392 (DLVKTRMQNQRSTGSFVGELMYKNSFDCFKKVLRYEGFFGLYR) lie on the Mitochondrial matrix side of the membrane. 2 positions are modified to N6-acetyllysine: lysine 353 and lysine 372. The chain crosses the membrane as a helical span at residues 393–412 (GLLPQLLGVAPEKAIKLTVN). Topologically, residues 413-435 (DFVRDKFMHKDGSVPLAAEILAG) are mitochondrial intermembrane. The helical transmembrane segment at 436 to 449 (GCAGGSQVIFTNPL) threads the bilayer. Topologically, residues 450–484 (EIVKIRLQVAGEITTGPRVSALSVVRDLGFFGIYK) are mitochondrial matrix. Lysine 453 carries the post-translational modification N6-methyllysine. N6-acetyllysine; alternate is present on lysine 484. Lysine 484 bears the N6-succinyllysine; alternate mark. The chain crosses the membrane as a helical span at residues 485 to 504 (GAKACFLRDIPFSAIYFPCY). Residues 505 to 523 (AHARASFANEDGQVSPGSL) are Mitochondrial intermembrane-facing. Residues 524 to 541 (LLAGAIAGMPAASLVTPA) traverse the membrane as a helical segment. Over 542-580 (DVIKTRLQVAARAGQTTYSGVIDCFKKILREEGPKALWK) the chain is Mitochondrial matrix. Lysine 580 is subject to N6-succinyllysine. The chain crosses the membrane as a helical span at residues 581–599 (GAARVFRSSPQFGVTLLTY). At 600–674 (ELLQRWFYID…PTSEAIGGGP (75 aa)) the chain is on the mitochondrial intermembrane side. The tract at residues 612–674 (GVKPMGSEPV…PTSEAIGGGP (63 aa)) is C-terminal domain. Lysine 661 carries the N6-acetyllysine modification.

The protein belongs to the mitochondrial carrier (TC 2.A.29) family. In terms of assembly, homodimer (via N-terminus).

Its subcellular location is the mitochondrion inner membrane. It carries out the reaction L-aspartate(in) + L-glutamate(out) + H(+)(out) = L-aspartate(out) + L-glutamate(in) + H(+)(in). The enzyme catalyses 3-sulfino-L-alanine(out) + L-glutamate(in) + H(+)(in) = 3-sulfino-L-alanine(in) + L-glutamate(out) + H(+)(out). It catalyses the reaction 3-sulfino-L-alanine(out) + L-aspartate(in) = 3-sulfino-L-alanine(in) + L-aspartate(out). In terms of biological role, mitochondrial electrogenic aspartate/glutamate antiporter that favors efflux of aspartate and entry of glutamate and proton within the mitochondria as part of the malate-aspartate shuttle. Also mediates the uptake of L-cysteinesulfinate (3-sulfino-L-alanine) by mitochondria in exchange of L-glutamate and proton. Can also exchange L-cysteinesulfinate with aspartate in their anionic form without any proton translocation. Lacks transport activity towards gamma-aminobutyric acid (GABA). This Macaca fascicularis (Crab-eating macaque) protein is Electrogenic aspartate/glutamate antiporter SLC25A13, mitochondrial.